We begin with the raw amino-acid sequence, 406 residues long: NADH-quinone oxidoreductase subunit D (406 aa).

Belongs to the complex I 49 kDa subunit family. In terms of assembly, NDH-1 is composed of 14 different subunits. Subunits NuoB, C, D, E, F, and G constitute the peripheral sector of the complex.

Its subcellular location is the cell inner membrane. It carries out the reaction a quinone + NADH + 5 H(+)(in) = a quinol + NAD(+) + 4 H(+)(out). NDH-1 shuttles electrons from NADH, via FMN and iron-sulfur (Fe-S) centers, to quinones in the respiratory chain. The immediate electron acceptor for the enzyme in this species is believed to be ubiquinone. Couples the redox reaction to proton translocation (for every two electrons transferred, four hydrogen ions are translocated across the cytoplasmic membrane), and thus conserves the redox energy in a proton gradient. This chain is NADH-quinone oxidoreductase subunit D, found in Leptospira biflexa serovar Patoc (strain Patoc 1 / Ames).